Consider the following 444-residue polypeptide: Putative zinc metalloprotease PD_0327 (444 aa).

H22 lines the Zn(2+) pocket. E23 is an active-site residue. H26 provides a ligand contact to Zn(2+). Residues I98–F120 traverse the membrane as a helical segment. One can recognise a PDZ domain in the interval T192–G278. 2 helical membrane-spanning segments follow: residues V371–I393 and A418–N440.

The protein belongs to the peptidase M50B family. Zn(2+) is required as a cofactor.

It is found in the cell inner membrane. This chain is Putative zinc metalloprotease PD_0327, found in Xylella fastidiosa (strain Temecula1 / ATCC 700964).